A 417-amino-acid polypeptide reads, in one-letter code: S-adenosylmethionine synthase (417 aa).

His16 provides a ligand contact to ATP. Asp18 provides a ligand contact to Mg(2+). Glu44 contacts K(+). The L-methionine site is built by Glu57 and Gln100. The flexible loop stretch occupies residues 100-110 (QSPDIAQGVDT). ATP-binding positions include 175 to 177 (DGK), 251 to 252 (KF), Asp260, 266 to 267 (RK), Ala283, and Lys287. Asp260 lines the L-methionine pocket. L-methionine is bound at residue Lys291.

The protein belongs to the AdoMet synthase family. As to quaternary structure, homotetramer; dimer of dimers. Mg(2+) is required as a cofactor. Requires K(+) as cofactor.

The protein localises to the cytoplasm. The catalysed reaction is L-methionine + ATP + H2O = S-adenosyl-L-methionine + phosphate + diphosphate. It functions in the pathway amino-acid biosynthesis; S-adenosyl-L-methionine biosynthesis; S-adenosyl-L-methionine from L-methionine: step 1/1. Its function is as follows. Catalyzes the formation of S-adenosylmethionine (AdoMet) from methionine and ATP. The overall synthetic reaction is composed of two sequential steps, AdoMet formation and the subsequent tripolyphosphate hydrolysis which occurs prior to release of AdoMet from the enzyme. The polypeptide is S-adenosylmethionine synthase (Synechococcus elongatus (strain ATCC 33912 / PCC 7942 / FACHB-805) (Anacystis nidulans R2)).